We begin with the raw amino-acid sequence, 145 residues long: Transcriptional regulator MraZ (145 aa).

2 SpoVT-AbrB domains span residues T5–E49 and T78–V121.

Belongs to the MraZ family. Forms oligomers.

The protein resides in the cytoplasm. It is found in the nucleoid. This is Transcriptional regulator MraZ from Ureaplasma urealyticum serovar 10 (strain ATCC 33699 / Western).